Consider the following 1151-residue polypeptide: Protein kinase C-like 1 (1151 aa).

REM-1 domains follow at residues 1-67 (MSFS…KTAQ) and 106-183 (KYDC…INVD). The tract at residues 64–88 (KTAQQSQGENGSEDNERCNSKEYGF) is disordered. The C2 domain maps to 190 to 309 (QPNDIMDNQQ…IRKKKAGQTN (120 aa)). Residue S226 is modified to Phosphoserine. Residues 306–331 (GQTNEQQGWVNASNINGGSSLASEEG) form a disordered region. Phorbol-ester/DAG-type zinc fingers lie at residues 414-461 (GHHF…VTKC) and 481-531 (PHRF…PDFC). Disordered stretches follow at residues 546–620 (QDTK…IIDK) and 649–669 (AQQTAEFSSPEKTLDPTSNRR). Residues 560–577 (PSAQLGSSIGTANGSDLS) are compositionally biased toward polar residues. Over residues 605–620 (VGRDSPTKQHDPIIDK) the composition is skewed to basic and acidic residues. S761 is modified (phosphoserine). Residues 782–816 (LAPTSTHASRTTDQQSPQKSQTSTSAKHKKRAAKR) are disordered. Positions 792-806 (TTDQQSPQKSQTSTS) are enriched in low complexity. The span at 807–816 (AKHKKRAAKR) shows a compositional bias: basic residues. Residues 824 to 1083 (FVLLKVLGKG…ADEVMEEPFF (260 aa)) enclose the Protein kinase domain. ATP contacts are provided by residues 830-838 (LGKGNFGKV) and K853. D949 (proton acceptor) is an active-site residue. Residues 1084–1151 (RNINFDDILN…FSFMPDDLDL (68 aa)) form the AGC-kinase C-terminal domain.

The protein belongs to the protein kinase superfamily. AGC Ser/Thr protein kinase family. PKC subfamily.

It carries out the reaction L-seryl-[protein] + ATP = O-phospho-L-seryl-[protein] + ADP + H(+). The enzyme catalyses L-threonyl-[protein] + ATP = O-phospho-L-threonyl-[protein] + ADP + H(+). Functionally, required for cell growth and for the G2-&gt;M transition of the cell division cycle. Mediates a protein kinase cascade; it activates BCK1 which itself activates MKK1/MKK2. The protein is Protein kinase C-like 1 (PKC1) of Saccharomyces cerevisiae (strain ATCC 204508 / S288c) (Baker's yeast).